We begin with the raw amino-acid sequence, 276 residues long: Ice-binding protein (276 aa).

The signal sequence occupies residues 1 to 24 (MKILKRIPVLAVLLVGLMTNCSND). An Ice-binding site motif (T-A/G-X-T/N) 1 motif is present at residues 79–82 (TGIT). A disulfide bridge connects residues Cys107 and Cys124. Short sequence motifs (ice-binding site motif (T-A/G-X-T/N)) lie at residues 245 to 248 (TGIN) and 263 to 266 (TAVT).

This sequence belongs to the ice-binding protein family. Monomer.

The protein localises to the secreted. In terms of biological role, has antifreeze activity for survival in a subzero environment. Binds to the surface of ice crystals and inhibits their growth. Has high thermal hysteresis (TH) activity, which is the ability to lower the freezing point of an aqueous solution below its melting point, and thus the freezing of the cell fluid can be prevented protecting the organism from ice damage. The TH activity of this protein is 2.2 degrees Celsius at 5 uM and 2.5 degrees Celsius at 50 uM. This chain is Ice-binding protein, found in Flavobacterium frigoris (strain PS1).